Consider the following 220-residue polypeptide: Small ribosomal subunit protein mS23 (220 aa).

It belongs to the mitochondrion-specific ribosomal protein mS23 family. In terms of assembly, component of the mitochondrial small ribosomal subunit (mt-SSU). Mature yeast 74S mitochondrial ribosomes consist of a small (37S) and a large (54S) subunit. The 37S small subunit contains a 15S ribosomal RNA (15S mt-rRNA) and at least 32 different proteins. The 54S large subunit contains a 21S rRNA (21S mt-rRNA) and at least 45 different proteins.

It localises to the mitochondrion. In terms of biological role, component of the mitochondrial ribosome (mitoribosome), a dedicated translation machinery responsible for the synthesis of mitochondrial genome-encoded proteins, including at least some of the essential transmembrane subunits of the mitochondrial respiratory chain. The mitoribosomes are attached to the mitochondrial inner membrane and translation products are cotranslationally integrated into the membrane. This is Small ribosomal subunit protein mS23 (rsm25) from Schizosaccharomyces pombe (strain 972 / ATCC 24843) (Fission yeast).